Here is an 804-residue protein sequence, read N- to C-terminus: Leucine--tRNA ligase (804 aa).

Residues proline 40–histidine 51 carry the 'HIGH' region motif. The short motif at lysine 576–serine 580 is the 'KMSKS' region element. Lysine 579 serves as a coordination point for ATP.

The protein belongs to the class-I aminoacyl-tRNA synthetase family.

The protein resides in the cytoplasm. The enzyme catalyses tRNA(Leu) + L-leucine + ATP = L-leucyl-tRNA(Leu) + AMP + diphosphate. This Staphylococcus aureus (strain Mu3 / ATCC 700698) protein is Leucine--tRNA ligase.